Consider the following 662-residue polypeptide: Polyunsaturated fatty acid (12S)/(13S)-lipoxygenase, epidermal-type (662 aa).

A PLAT domain is found at 2 to 114 (GKYKILVVTG…TIYLPEGTAL (113 aa)). The region spanning 114 to 662 (LKVNDDTKNL…PSMVENSVTI (549 aa)) is the Lipoxygenase domain. Residues His-360, His-365, His-540, His-544, and Ile-662 each coordinate Fe cation.

Belongs to the lipoxygenase family. It depends on Fe cation as a cofactor.

Its subcellular location is the cytoplasm. The catalysed reaction is (5Z,8Z,11Z,14Z)-eicosatetraenoate + O2 = (12S)-hydroperoxy-(5Z,8Z,10E,14Z)-eicosatetraenoate. The enzyme catalyses 1-O-methyl-(9Z,12Z)-octadecadienoate + O2 = 1-O-methyl-(13S)-hydroperoxy-(9Z,11E)-octadecadienoate. It carries out the reaction (8Z,11Z,14Z)-eicosatrienoate + O2 = (12S)-hydroperoxy-(8Z,10E,14Z)-eicosatrienoate. It catalyses the reaction (5Z,8Z,11Z)-eicosatrienoate + O2 = (12S)-hydroperoxy-(5Z,8Z,10E)-eicosatrienoate. The catalysed reaction is 1-O-methyl-(5Z,8Z,11Z,14Z)-eicosatetraenoate + O2 = 1-O-methyl-(12S)-hydroperoxy-(5Z,8Z,10E,14Z)-eicosatetraenoate. The enzyme catalyses (9Z,12Z)-octadecadienoate + O2 = (13S)-hydroperoxy-(9Z,11E)-octadecadienoate. It carries out the reaction (4Z,7Z,10Z,13Z,16Z,19Z)-docosahexaenoate + O2 = (14S)-hydroperoxy-(4Z,7Z,10Z,12E,16Z,19Z)-docosahexaenoate. It functions in the pathway lipid metabolism; hydroperoxy eicosatetraenoic acid biosynthesis. Arachidonate 12-lipoxygenase activity is decreased when the pH decreases from 7.4 to 6.0. Its function is as follows. Catalyzes the regio and stereo-specific incorporation of a single molecule of dioxygen into free and esterified polyunsaturated fatty acids generating lipid hydroperoxides that can be further reduced to the corresponding hydroxy species. Shows increasing catalytic activity within the series arachidonic acid &lt; 5,8,11-eicosatrienoic acid &lt; linoleic acid &lt; 8,11,14-eicosatrienoic acid. This is Polyunsaturated fatty acid (12S)/(13S)-lipoxygenase, epidermal-type from Rattus norvegicus (Rat).